The primary structure comprises 265 residues: Homeobox protein CDX-1 (265 aa).

The segment at 9 to 152 is disordered; it reads KDSPVYPGPA…GGGGVSGKTR (144 aa). Pro residues predominate over residues 30-43; that stretch reads YGPPAPPPAPPQYP. A compositionally biased stretch (low complexity) spans 73–92; sequence AAAYGPGPAAPAASPASLAF. The segment covering 93–108 has biased composition (pro residues); it reads GPPPDFSPVPAPPGPG. The segment covering 110 to 126 has biased composition (low complexity); sequence GLLAQPLGGPGTPSSPG. Residues 154-213 constitute a DNA-binding region (homeobox); it reads KDKYRVVYTDHQRLELEKEFHYSRYITIRRKSELAANLGLTERQVKIWFQNRRAKERKVN. Residues 157-178 form an interaction with DNA region; the sequence is YRVVYTDHQRLELEKEFHYSRY. The segment at 196-207 is interaction with 5-mCpG DNA; sequence RQVKIWFQNRRA. A compositionally biased stretch (basic residues) spans 206–217; sequence RAKERKVNKKKQ. Positions 206–265 are disordered; the sequence is RAKERKVNKKKQQQQQPPQPPTAHDITATPARPSLGGLCPSNTSLLATSSPMPVKEEFLP. A compositionally biased stretch (polar residues) spans 245–256; that stretch reads PSNTSLLATSSP.

This sequence belongs to the Caudal homeobox family.

Its subcellular location is the nucleus. In terms of biological role, plays a role in transcriptional regulation. Involved in activated KRAS-mediated transcriptional activation of PRKD1 in colorectal cancer (CRC) cells. Binds to the PRKD1 promoter in colorectal cancer (CRC) cells. Could play a role in the terminal differentiation of the intestine. Binds preferentially to methylated DNA. This chain is Homeobox protein CDX-1 (CDX1), found in Pongo pygmaeus (Bornean orangutan).